Consider the following 178-residue polypeptide: Probetacellulin (178 aa).

The first 31 residues, 1–31 (MARAAPGSGASPLPLLPALALGLVILHCVVA), serve as a signal peptide directing secretion. Topologically, residues 32–118 (DGNSTRSPED…LFYLRGDRGQ (87 aa)) are extracellular. An N-linked (GlcNAc...) asparagine glycan is attached at Asn34. One can recognise an EGF-like domain in the interval 65–105 (HFSRCPKQYKHYCIKGRCRFVVAEQTPSCVCDEGYAGARCE). Intrachain disulfides connect Cys69/Cys82, Cys77/Cys93, and Cys95/Cys104. Positions 112 to 178 (LRGDRGQILV…NDDIQETSIA (67 aa)) are cleaved as a propeptide — removed in mature form. Residues 119–139 (ILVICLIAVMVIFIILVVSIC) form a helical membrane-spanning segment. At 140–178 (TCCHPLRKRRKRRKKEEEMETLGKDITPINDDIQETSIA) the chain is on the cytoplasmic side.

In terms of assembly, monomer. Interacts with EGFR and ERBB4. In terms of tissue distribution, expressed in a wide range of tissues, including the mammary gland.

The protein resides in the secreted. The protein localises to the extracellular space. It localises to the cell membrane. Functionally, growth factor that binds to EGFR, ERBB4 and other EGF receptor family members. Potent mitogen for retinal pigment epithelial cells and vascular smooth muscle cells. This chain is Probetacellulin (BTC), found in Bos taurus (Bovine).